Consider the following 573-residue polypeptide: Methionine--tRNA ligase (573 aa).

The 'HIGH' region signature appears at 11–21; that stretch reads PYINGIKHLGN. Residues cysteine 143, cysteine 146, cysteine 156, and cysteine 159 each contribute to the Zn(2+) site. The 'KMSKS' region motif lies at 346-350; sequence QFSTS. Threonine 349 is an ATP binding site.

This sequence belongs to the class-I aminoacyl-tRNA synthetase family. MetG type 1 subfamily. In terms of assembly, monomer. Zn(2+) is required as a cofactor.

The protein resides in the cytoplasm. The catalysed reaction is tRNA(Met) + L-methionine + ATP = L-methionyl-tRNA(Met) + AMP + diphosphate. Is required not only for elongation of protein synthesis but also for the initiation of all mRNA translation through initiator tRNA(fMet) aminoacylation. The sequence is that of Methionine--tRNA ligase from Ruegeria sp. (strain TM1040) (Silicibacter sp.).